Consider the following 658-residue polypeptide: Endoplasmic reticulum mannosyl-oligosaccharide 1,2-alpha-mannosidase (658 aa).

The Cytoplasmic portion of the chain corresponds to M1–N50. The helical; Signal-anchor for type II membrane protein transmembrane segment at V51–A71 threads the bilayer. Topologically, residues D72–A658 are lumenal. S102 carries the post-translational modification Phosphoserine. A disordered region spans residues G123–D142. The Proton donor role is filled by E289. D422 is an active-site residue. A disulfide bond links C486 and C515. Catalysis depends on E529, which acts as the Proton donor. E558 is an active-site residue. T647 is a binding site for Ca(2+).

This sequence belongs to the glycosyl hydrolase 47 family. Ca(2+) is required as a cofactor.

Its subcellular location is the endoplasmic reticulum membrane. The catalysed reaction is N(4)-(alpha-D-Man-(1-&gt;2)-alpha-D-Man-(1-&gt;2)-alpha-D-Man-(1-&gt;3)-[alpha-D-Man-(1-&gt;2)-alpha-D-Man-(1-&gt;3)-[alpha-D-Man-(1-&gt;2)-alpha-D-Man-(1-&gt;6)]-alpha-D-Man-(1-&gt;6)]-beta-D-Man-(1-&gt;4)-beta-D-GlcNAc-(1-&gt;4)-beta-D-GlcNAc)-L-asparaginyl-[protein] (N-glucan mannose isomer 9A1,2,3B1,2,3) + 4 H2O = N(4)-(alpha-D-Man-(1-&gt;3)-[alpha-D-Man-(1-&gt;3)-[alpha-D-Man-(1-&gt;6)]-alpha-D-Man-(1-&gt;6)]-beta-D-Man-(1-&gt;4)-beta-D-GlcNAc-(1-&gt;4)-beta-D-GlcNAc)-L-asparaginyl-[protein] (N-glucan mannose isomer 5A1,2) + 4 beta-D-mannose. It carries out the reaction N(4)-(alpha-D-Man-(1-&gt;2)-alpha-D-Man-(1-&gt;2)-alpha-D-Man-(1-&gt;3)-[alpha-D-Man-(1-&gt;3)-[alpha-D-Man-(1-&gt;2)-alpha-D-Man-(1-&gt;6)]-alpha-D-Man-(1-&gt;6)]-beta-D-Man-(1-&gt;4)-beta-D-GlcNAc-(1-&gt;4)-beta-D-GlcNAc)-L-asparaginyl-[protein] (N-glucan mannose isomer 8A1,2,3B1,3) + 3 H2O = N(4)-(alpha-D-Man-(1-&gt;3)-[alpha-D-Man-(1-&gt;3)-[alpha-D-Man-(1-&gt;6)]-alpha-D-Man-(1-&gt;6)]-beta-D-Man-(1-&gt;4)-beta-D-GlcNAc-(1-&gt;4)-beta-D-GlcNAc)-L-asparaginyl-[protein] (N-glucan mannose isomer 5A1,2) + 3 beta-D-mannose. The protein operates within protein modification; protein glycosylation. Its function is as follows. Involved in glycoprotein quality control targeting of misfolded glycoproteins for degradation. It primarily trims a single alpha-1,2-linked mannose residue from Man(9)GlcNAc(2) to produce Man(8)GlcNAc(2), but at high enzyme concentrations, as found in the ER quality control compartment (ERQC), it further trims the carbohydrates to Man(5-6)GlcNAc(2). The protein is Endoplasmic reticulum mannosyl-oligosaccharide 1,2-alpha-mannosidase (Man1b1) of Mus musculus (Mouse).